We begin with the raw amino-acid sequence, 179 residues long: Protein TIFY 11a (179 aa).

A Tify domain is found at 62-97 (VDGGGQQFTIFYAGKVVVIDRCTPAMAAELMRFASA). A Jas motif is present at residues 115-140 (PIARKASLKRFLAKRKATPASARSSY). The short motif at 117–124 (ARKASLKR) is the Nuclear localization signal element.

Belongs to the TIFY/JAZ family. As to quaternary structure, interacts with BHLH148. Interacts with COI1A in a coronatine-dependent manner. Interacts with COI1B in a coronatine-dependent manner. Coronatine is an analog of jasmonoyl isoleucine (JA-Ile). Interacts with RSS3. Forms a ternary complex with RSS3 and BHLH094 in the nucleus. Interacts with BHLH062 and NINJA1. Interacts with MYB30. In terms of processing, ubiquitinated. Targeted for degradation by the SCF(COI1) E3 ubiquitin ligase-proteasome pathway during jasmonate signaling.

It localises to the nucleus. In terms of biological role, repressor of jasmonate (JA) responses. Forms a ternary complex with RSS3 and BHLH94 to negatively regulate JA-responsive genes. Acts as a positive regulator of tolerance to salt stress. Involved in salt tolerance by modulating potassium homeostasis through JA signaling and regulation of the expression of potassium ion transporter genes. Acts as a transcriptional regulator targeted by the SCF(COI1) E3 ubiquitin ligase complexes in the JA signaling pathway, and interacts with BHLH062 that may directly regulate the ion transporter genes. Acts as a positive regulator of tolerance to dehydration stress. Acts as a negative regulator of tolerance to cold stress by interacting with MYB30. The protein is Protein TIFY 11a of Oryza sativa subsp. japonica (Rice).